The primary structure comprises 802 residues: Threonine--tRNA ligase 2, cytoplasmic (802 aa).

A2 bears the N-acetylalanine mark. Coiled coils occupy residues 3–23 (AEAL…EDIR) and 76–96 (AEER…AQEA). Positions 86–98 (ESAELEAAQEAGA) are enriched in low complexity. A disordered region spans residues 86 to 123 (ESAELEAAQEAGAQPPPSQSQDKDMKKKKMKESEADSE). The segment covering 106–123 (QDKDMKKKKMKESEADSE) has biased composition (basic and acidic residues). The region spanning 157–222 (DTSNIITVRV…EGDSSLELLT (66 aa)) is the TGS domain. The residue at position 453 (S453) is a Phosphoserine. The Nuclear localization signal signature appears at 786–792 (KLKNLRK).

Belongs to the class-II aminoacyl-tRNA synthetase family. In terms of assembly, may be a component of the multisynthetase complex (MSC), a large multi-subunit complex which contains at least eight different aminoacyl-tRNA synthetases plus three auxillary subunits AIMP1, AIMP2 and EEF1E1. Interacts with the MSC components EPRS1, AIMP1, AIMP2 and KARS1.

The protein localises to the cytoplasm. Its subcellular location is the nucleus. It catalyses the reaction tRNA(Thr) + L-threonine + ATP = L-threonyl-tRNA(Thr) + AMP + diphosphate + H(+). Catalyzes the attachment of threonine to tRNA(Thr) in a two-step reaction: threonine is first activated by ATP to form Thr-AMP and then transferred to the acceptor end of tRNA(Thr). Also edits incorrectly charged tRNA(Thr) via its editing domain, at the post-transfer stage. The polypeptide is Threonine--tRNA ligase 2, cytoplasmic (Homo sapiens (Human)).